Reading from the N-terminus, the 438-residue chain is Transmembrane protein 184C (438 aa).

7 helical membrane-spanning segments follow: residues L17 to L37, A48 to L68, I86 to I106, Y179 to Y199, Y212 to Y232, V254 to I274, and A287 to A307. Residues R355–S438 form a disordered region. 2 stretches are compositionally biased toward low complexity: residues S374–M390 and T404–T413. Residue S422 is modified to Phosphoserine. Positions I425–S438 are enriched in basic and acidic residues.

This sequence belongs to the TMEM184 family. As to expression, widely expressed with higher expression in lung, kidney, spleen, pancreas, thymus, prostate, testis, ovary, small intestine and thyroid.

The protein localises to the membrane. In terms of biological role, possible tumor suppressor which may play a role in cell growth. This chain is Transmembrane protein 184C (TMEM184C), found in Homo sapiens (Human).